A 571-amino-acid polypeptide reads, in one-letter code: MNWIFIFLAAAVAIGCEARQERTYTVCQKPEGDLHYFKEGRKTDEELCAKRLATAYFHDEVNQTGWAFLEVDVISPKIPHYLQGYAAGFAEGRATRHLIDLHIINTVNGYCDGAKHFCDELGEFMVDNLKWMEQEIRENPEDEYWQQVNLTVNQLFGLIHGYENQLGAEIDFKQIAVHPIFMIQIAGDLEDLAMKFKKPENPKKVFSGPGHCSALVKLLPKNEDILFSHVTWSSYGTMLRINKKYSFKTGDPGQIYSFSSYPASITSTDDFVLTSAKLAILETTIGNYNEKSLDLITPNTVLTWIRAEIAHRTASSGLQWAEAFGRHNSGTYNNEWVVVDYKQFHRGKEVQPETGIIHVVEQMPGHIVHSDKTAHLFRETYWPGYNQPYYKQIIRFSDTDKMVEKFGDWYSYDKTPRALIFKRDHNTVTDMSSMIALMRSNNYTKDPLSKCDCNPPYSAENAIACRSDLNPLNGTYPFKSLGFRDHGAIDVKVTNSKLINSLQFTAVSGPPGGVTKDVPIFDWKTSPLREKVPHFGQPDRWNFAPVTYKWRKDAHRHYHLYQKLHKELSSL.

Positions 1–18 (MNWIFIFLAAAVAIGCEA) are cleaved as a signal peptide. Asparagine 62, asparagine 149, asparagine 442, and asparagine 473 each carry an N-linked (GlcNAc...) asparagine glycan.

The protein belongs to the phospholipase B-like family.

It localises to the lysosome. Functionally, putative phospholipase. This Caenorhabditis elegans protein is Putative phospholipase B-like 1.